An 855-amino-acid polypeptide reads, in one-letter code: Inactive rhomboid protein 1 (855 aa).

The segment at Met1–Ser36 is disordered. Over Met1–Thr411 the chain is Cytoplasmic. A compositionally biased stretch (low complexity) spans Pro25–Ser36. Phosphoserine occurs at positions 76 and 176. Phosphothreonine is present on residues Thr180 and Thr183. Ser390 is modified (phosphoserine). A helical transmembrane segment spans residues Phe412–Phe432. Residues Ser433–Arg655 are Lumenal-facing. N-linked (GlcNAc...) asparagine glycosylation is present at Asn583. The chain crosses the membrane as a helical span at residues Leu656–Gln676. The Cytoplasmic segment spans residues Met677 to Arg691. Residues Ile692 to Pro712 form a helical membrane-spanning segment. The Lumenal segment spans residues Tyr713–Arg714. The helical transmembrane segment at Ala715 to Phe735 threads the bilayer. At Gln736–Arg746 the chain is on the cytoplasmic side. Residues Ala747–Ile767 form a helical membrane-spanning segment. At Asp768–His772 the chain is on the lumenal side. Residues Ile773–Gly793 traverse the membrane as a helical segment. Over Lys794–Gln803 the chain is Cytoplasmic. A helical membrane pass occupies residues Ile804–Phe824. Topologically, residues Tyr825–His855 are lumenal.

This sequence belongs to the peptidase S54 family. Homodimer, or homooligomer. Interacts with TGFA and HBEGF. Interacts with EGF; may retain EGF in the endoplasmic reticulum and regulates its degradation through the endoplasmic reticulum-associated degradation (ERAD). Interacts (via cytoplasmic N-terminus) with FRMD8/iTAP; this interaction leads to mutual protein stabilization. Interacts with ADAM17/TACE.

The protein localises to the endoplasmic reticulum membrane. The protein resides in the golgi apparatus membrane. Regulates ADAM17 protease, a sheddase of the epidermal growth factor (EGF) receptor ligands and TNF, thereby plays a role in sleep, cell survival, proliferation, migration and inflammation. Does not exhibit any protease activity on its own. This Plecturocebus moloch (Dusky titi monkey) protein is Inactive rhomboid protein 1 (RHBDF1).